Here is a 357-residue protein sequence, read N- to C-terminus: Phenylalanine--tRNA ligase alpha subunit (357 aa).

Residue E259 coordinates Mg(2+).

This sequence belongs to the class-II aminoacyl-tRNA synthetase family. Phe-tRNA synthetase alpha subunit type 1 subfamily. In terms of assembly, tetramer of two alpha and two beta subunits. Mg(2+) is required as a cofactor.

Its subcellular location is the cytoplasm. It catalyses the reaction tRNA(Phe) + L-phenylalanine + ATP = L-phenylalanyl-tRNA(Phe) + AMP + diphosphate + H(+). This chain is Phenylalanine--tRNA ligase alpha subunit, found in Jannaschia sp. (strain CCS1).